Consider the following 233-residue polypeptide: Small ribosomal subunit protein uS2c (233 aa).

This sequence belongs to the universal ribosomal protein uS2 family.

It localises to the plastid. The protein localises to the chloroplast. In Staurastrum punctulatum (Green alga), this protein is Small ribosomal subunit protein uS2c (rps2).